Reading from the N-terminus, the 618-residue chain is uncharacterized protein (618 aa).

It to Rhizobium NGR234A y4qD.

This is an uncharacterized protein from Sinorhizobium fredii (strain NBRC 101917 / NGR234).